A 189-amino-acid chain; its full sequence is dTTP/UTP pyrophosphatase (189 aa).

The Proton acceptor role is filled by D73.

It belongs to the Maf family. YhdE subfamily. The cofactor is a divalent metal cation.

Its subcellular location is the cytoplasm. It catalyses the reaction dTTP + H2O = dTMP + diphosphate + H(+). It carries out the reaction UTP + H2O = UMP + diphosphate + H(+). In terms of biological role, nucleoside triphosphate pyrophosphatase that hydrolyzes dTTP and UTP. May have a dual role in cell division arrest and in preventing the incorporation of modified nucleotides into cellular nucleic acids. In Vibrio parahaemolyticus serotype O3:K6 (strain RIMD 2210633), this protein is dTTP/UTP pyrophosphatase.